Here is a 348-residue protein sequence, read N- to C-terminus: D-alanine--D-alanine ligase (348 aa).

One can recognise an ATP-grasp domain in the interval 132 to 334 (KRILEVAGVP…YSDLIKELVV (203 aa)). An ATP-binding site is contributed by 162-217 (LEKLTFPVFVKPANMGSSVGISKAENESELRSAIDLALKYDSRILIEQGVVAREIE). Mg(2+) is bound by residues Asp-288, Glu-301, and Asn-303.

Belongs to the D-alanine--D-alanine ligase family. It depends on Mg(2+) as a cofactor. The cofactor is Mn(2+).

Its subcellular location is the cytoplasm. It catalyses the reaction 2 D-alanine + ATP = D-alanyl-D-alanine + ADP + phosphate + H(+). The protein operates within cell wall biogenesis; peptidoglycan biosynthesis. Functionally, cell wall formation. The polypeptide is D-alanine--D-alanine ligase (Streptococcus thermophilus (strain ATCC BAA-250 / LMG 18311)).